Reading from the N-terminus, the 99-residue chain is Keratinocyte differentiation-associated protein (99 aa).

An N-terminal signal peptide occupies residues 1-22 (MKIPVLPAVVLLSLLALHSAQG).

Highly expressed in skin, but not detectable in any other tissue examined. Expression restricted to cornified/stratified epithelia and not detected in non-cornified/stratified epithelia.

The protein localises to the secreted. In terms of biological role, may act as a soluble regulator of keratinocyte differentiation. May play an important role in embryonic skin morphogenesis. The polypeptide is Keratinocyte differentiation-associated protein (Canis lupus familiaris (Dog)).